Reading from the N-terminus, the 154-residue chain is Snaclec salmorin subunit A (154 aa).

Residues 1-23 form the signal peptide; the sequence is MGRFIFVSFGLLVVFLSLSGTGA. 3 disulfides stabilise this stretch: Cys27/Cys38, Cys55/Cys152, and Cys127/Cys144. Positions 34–153 constitute a C-type lectin domain; it reads NNGHCYQAFN…CGQRNPFVCE (120 aa). The Ca(2+) site is built by Ser66, Glu68, and Glu72. Glu153 contributes to the Ca(2+) binding site.

The protein belongs to the snaclec family. In terms of assembly, heterodimer of subunits A and B; disulfide-linked. Expressed by the venom gland.

Its subcellular location is the secreted. Its function is as follows. Inhibits thrombin-induced fibrinogen clotting and factor Xa-induced prothrombin activation. Binds to thrombin and prothrombin exosites. The protein is Snaclec salmorin subunit A of Gloydius brevicauda (Korean slamosa snake).